The primary structure comprises 87 residues: HssA/B-like protein 58 (87 aa).

Positions 1–13 (MTILSAITSISRP) are enriched in polar residues. Positions 1–31 (MTILSAITSISRPNKSSKSVISSNGGSSLSM) are disordered. Positions 14-31 (NKSSKSVISSNGGSSLSM) are enriched in low complexity.

It belongs to the hssA/B family.

The protein is HssA/B-like protein 58 (hssl58) of Dictyostelium discoideum (Social amoeba).